A 295-amino-acid chain; its full sequence is Protoheme IX farnesyltransferase (295 aa).

A run of 9 helical transmembrane segments spans residues 7–27, 34–54, 78–98, 106–126, 131–151, 161–181, 207–227, 228–248, and 263–283; these read VTKP…FLLA, VPLF…GCVF, LIAP…GIAL, LAAL…SLYM, VYGT…GYCA, LILL…IAIF, ITLY…GGYA, GYKY…MALS, and LFMF…VDFQ.

This sequence belongs to the UbiA prenyltransferase family. Protoheme IX farnesyltransferase subfamily.

It localises to the cell inner membrane. It catalyses the reaction heme b + (2E,6E)-farnesyl diphosphate + H2O = Fe(II)-heme o + diphosphate. It functions in the pathway porphyrin-containing compound metabolism; heme O biosynthesis; heme O from protoheme: step 1/1. Converts heme B (protoheme IX) to heme O by substitution of the vinyl group on carbon 2 of heme B porphyrin ring with a hydroxyethyl farnesyl side group. This Aeromonas salmonicida (strain A449) protein is Protoheme IX farnesyltransferase.